The chain runs to 313 residues: Small ribosomal subunit biogenesis GTPase RsgA (313 aa).

A CP-type G domain is found at 80–237; sequence KVALRQVIVS…LIDTPGIKEF (158 aa). GTP is bound by residues 129 to 132 and 180 to 188; these read NKVD and GQSGVGKSS. The Zn(2+) site is built by Cys-261, Cys-266, His-268, and Cys-274.

This sequence belongs to the TRAFAC class YlqF/YawG GTPase family. RsgA subfamily. Monomer. Associates with 30S ribosomal subunit, binds 16S rRNA. It depends on Zn(2+) as a cofactor.

It is found in the cytoplasm. Its function is as follows. One of several proteins that assist in the late maturation steps of the functional core of the 30S ribosomal subunit. Helps release RbfA from mature subunits. May play a role in the assembly of ribosomal proteins into the subunit. Circularly permuted GTPase that catalyzes slow GTP hydrolysis, GTPase activity is stimulated by the 30S ribosomal subunit. This is Small ribosomal subunit biogenesis GTPase RsgA from Borrelia recurrentis (strain A1).